The following is a 121-amino-acid chain: MLTDQEKIDLVNALDFVVIEPHTQSIYVHNDEKTNGVLAKVLHTISVDEYIESFKKGSLIDIFPAAMQEAGAEGFKDGQFVIMPKKFYVDQCYAMSKEIERLTNLNNLHNIKPNTYQGLIH.

The sequence is that of SPbeta prophage-derived uncharacterized protein YorW (yorW) from Bacillus subtilis (strain 168).